Reading from the N-terminus, the 837-residue chain is Dapper homolog 2 (837 aa).

The stretch at 65 to 113 forms a coiled coil; sequence ENVSKEELRLEATLSLLKQQLTRLRRQDVGLKTHLQQLDQQITELKLDV. Disordered regions lie at residues 189–265, 424–497, 512–564, 600–649, and 738–782; these read ADES…PKYQ, HGKH…DKSS, GSQR…KQSG, QQIP…HTQR, and EMSD…EDEG. Polar residues-rich tracts occupy residues 246 to 265 and 432 to 445; these read VKSS…PKYQ and LDLQ…NNTA. 3 stretches are compositionally biased toward basic and acidic residues: residues 456–466, 486–496, and 548–560; these read ASEKRSGHFPK, EGSRASCHDKS, and LSRE…RTDL. A compositionally biased stretch (polar residues) spans 741-759; it reads DYTTNRFGDSESSQGSQTA. Over residues 768 to 782 the composition is skewed to acidic residues; it reads LDEEDLLEEEEEDEG. The short motif at 834 to 837 is the PDZ-binding element; it reads MTLV.

This sequence belongs to the dapper family. Interacts with dvl2.

The protein resides in the cytoplasm. Its subcellular location is the late endosome. It localises to the nucleus. The protein localises to the cell membrane. Its function is as follows. Involved in regulation of intracellular signaling pathways during development. Specifically thought to play a role in canonical and/or non-canonical Wnt signaling pathways through interaction with DSH (Dishevelled) family proteins. Positive regulator of the Wnt signaling pathway which acts downstream of wnt1 indicative for non-canonical Wnt signaling. Also negatively regulates the Nodal signaling pathway, possibly by promoting the lysosomal degradation of Nodal receptors. Required for convergent extension movements in gastrulation. This is Dapper homolog 2 (dact2) from Danio rerio (Zebrafish).